Consider the following 289-residue polypeptide: Type II methyltransferase M.MjaIII (289 aa).

S-adenosyl-L-methionine contacts are provided by tryptophan 9, lysine 13, aspartate 63, and aspartate 199.

Belongs to the N(4)/N(6)-methyltransferase family.

The enzyme catalyses a 2'-deoxyadenosine in DNA + S-adenosyl-L-methionine = an N(6)-methyl-2'-deoxyadenosine in DNA + S-adenosyl-L-homocysteine + H(+). Functionally, an alpha subtype methylase that recognizes the double-stranded sequence 5'-GATC-3', methylates A-2 on both strands, and protects the DNA from cleavage by the MjaIII endonuclease. The sequence is that of Type II methyltransferase M.MjaIII (mjaIIIM) from Methanocaldococcus jannaschii (strain ATCC 43067 / DSM 2661 / JAL-1 / JCM 10045 / NBRC 100440) (Methanococcus jannaschii).